A 420-amino-acid polypeptide reads, in one-letter code: Glucose-1-phosphate adenylyltransferase (420 aa).

Alpha-D-glucose 1-phosphate contacts are provided by residues Y107, G172, 187 to 188 (EK), and S205.

The protein belongs to the bacterial/plant glucose-1-phosphate adenylyltransferase family. In terms of assembly, homotetramer.

It catalyses the reaction alpha-D-glucose 1-phosphate + ATP + H(+) = ADP-alpha-D-glucose + diphosphate. The protein operates within glycan biosynthesis; glycogen biosynthesis. Its function is as follows. Involved in the biosynthesis of ADP-glucose, a building block required for the elongation reactions to produce glycogen. Catalyzes the reaction between ATP and alpha-D-glucose 1-phosphate (G1P) to produce pyrophosphate and ADP-Glc. The polypeptide is Glucose-1-phosphate adenylyltransferase (Rhizobium etli (strain CIAT 652)).